Reading from the N-terminus, the 432-residue chain is Adenylosuccinate synthetase (432 aa).

GTP is bound by residues 12–18 (GDEGKGK) and 40–42 (GHT). Residue Asp13 is the Proton acceptor of the active site. Positions 13 and 40 each coordinate Mg(2+). IMP contacts are provided by residues 13-16 (DEGK), 38-41 (NAGH), Thr132, Arg146, Gln226, Thr241, and Arg305. His41 (proton donor) is an active-site residue. 301–307 (VVTGRKR) provides a ligand contact to substrate. GTP-binding positions include Arg307, 333 to 335 (KLD), and 415 to 417 (STS).

The protein belongs to the adenylosuccinate synthetase family. Homodimer. Mg(2+) is required as a cofactor.

The protein localises to the cytoplasm. The enzyme catalyses IMP + L-aspartate + GTP = N(6)-(1,2-dicarboxyethyl)-AMP + GDP + phosphate + 2 H(+). It participates in purine metabolism; AMP biosynthesis via de novo pathway; AMP from IMP: step 1/2. Plays an important role in the de novo pathway of purine nucleotide biosynthesis. Catalyzes the first committed step in the biosynthesis of AMP from IMP. This is Adenylosuccinate synthetase from Rhizobium leguminosarum bv. trifolii (strain WSM2304).